A 123-amino-acid chain; its full sequence is Fluoride-specific ion channel FluC (123 aa).

4 helical membrane passes run 5–25 (LIIG…SGII), 29–49 (FGIP…VGFV), 65–85 (LIIT…YETF), and 94–114 (IKFL…IYVG). Residues glycine 72 and threonine 75 each coordinate Na(+).

Belongs to the fluoride channel Fluc/FEX (TC 1.A.43) family.

It is found in the cell membrane. The enzyme catalyses fluoride(in) = fluoride(out). With respect to regulation, na(+) is not transported, but it plays an essential structural role and its presence is essential for fluoride channel function. Its function is as follows. Fluoride-specific ion channel. Important for reducing fluoride concentration in the cell, thus reducing its toxicity. The sequence is that of Fluoride-specific ion channel FluC from Methanococcus aeolicus (strain ATCC BAA-1280 / DSM 17508 / OCM 812 / Nankai-3).